The sequence spans 146 residues: Hemoglobin cathodic subunit beta (146 aa).

The 145-residue stretch at 2–146 (HFSDAERDAI…VAAALSSRYF (145 aa)) folds into the Globin domain. Heme b-binding residues include His-63 and His-92.

The protein belongs to the globin family. In terms of assembly, heterotetramer of two alpha chains and two beta chains. As to expression, red blood cells.

Functionally, involved in oxygen transport from gills to the various peripheral tissues. In Hoplosternum littorale (Hassar), this protein is Hemoglobin cathodic subunit beta (hbb).